A 566-amino-acid polypeptide reads, in one-letter code: Arginine--tRNA ligase (566 aa).

A 'HIGH' region motif is present at residues 123–133 (PNVAKPFHVGH).

The protein belongs to the class-I aminoacyl-tRNA synthetase family. In terms of assembly, monomer.

Its subcellular location is the cytoplasm. The catalysed reaction is tRNA(Arg) + L-arginine + ATP = L-arginyl-tRNA(Arg) + AMP + diphosphate. The sequence is that of Arginine--tRNA ligase from Alkaliphilus metalliredigens (strain QYMF).